The sequence spans 178 residues: Large ribosomal subunit protein uL6 (178 aa).

It belongs to the universal ribosomal protein uL6 family. Part of the 50S ribosomal subunit.

In terms of biological role, this protein binds to the 23S rRNA, and is important in its secondary structure. It is located near the subunit interface in the base of the L7/L12 stalk, and near the tRNA binding site of the peptidyltransferase center. In Streptococcus pneumoniae (strain JJA), this protein is Large ribosomal subunit protein uL6.